The following is a 376-amino-acid chain: 5-amino-6-(D-ribitylamino)uracil--L-tyrosine 4-hydroxyphenyl transferase 1 (376 aa).

The Radical SAM core domain maps to 50–284 (VTYVVNRNIN…AISRILLHGH (235 aa)). [4Fe-4S] cluster contacts are provided by Cys-64, Cys-68, and Cys-71.

The protein belongs to the radical SAM superfamily. CofH family. In terms of assembly, consists of two subunits, CofG and CofH. It depends on [4Fe-4S] cluster as a cofactor.

The enzyme catalyses 5-amino-6-(D-ribitylamino)uracil + L-tyrosine + S-adenosyl-L-methionine = 5-amino-5-(4-hydroxybenzyl)-6-(D-ribitylimino)-5,6-dihydrouracil + 2-iminoacetate + 5'-deoxyadenosine + L-methionine + H(+). The protein operates within cofactor biosynthesis; coenzyme F0 biosynthesis. Functionally, catalyzes the radical-mediated synthesis of 5-amino-5-(4-hydroxybenzyl)-6-(D-ribitylimino)-5,6-dihydrouracil from 5-amino-6-(D-ribitylamino)uracil and L-tyrosine. This Methanosarcina barkeri (strain Fusaro / DSM 804) protein is 5-amino-6-(D-ribitylamino)uracil--L-tyrosine 4-hydroxyphenyl transferase 1.